Reading from the N-terminus, the 857-residue chain is Blue light receptor lreA (857 aa).

PAS domains follow at residues 306–328 (IIYVSEAFERLTGYTEQEIVGQN), 479–542 (LVEN…TTTD), and 608–642 (LSKSGIVLFMTSKARPVLGRMPDELIGKSLQDLMD). The GATA-type zinc-finger motif lies at 811 to 836 (CAICQTKKTPEWRRGPSGERDLCNSC).

In terms of biological role, transcription factor that acts as a blue light sensor. Plays crucial roles in fungal growth and asexual development. Involved in conidiophore formation, sclerotium production, and conidial stress tolerance. Promotes conidiation by inducing the expression of brlA and abaA. Positively regulates the fungal pathogenicity towards maize. In blue light conditions, inhibits aflatoxin B1 (AFB1) biosynthesis by down-regulating the expression of key genes such as aflA, aflJ, aflH, aflO and aflK. The chain is Blue light receptor lreA from Aspergillus flavus.